The primary structure comprises 342 residues: Cytochrome c oxidase subunit 2 (342 aa).

A signal peptide spans 1–22 (MKLWKTASRFLPLSFLTLFLTG). Residue Cys-23 is the site of N-palmitoyl cysteine attachment. Residue Cys-23 is the site of S-diacylglycerol cysteine attachment. The Extracellular segment spans residues 23–50 (CLGEENLTALDPKGPQAQWIYDNMILSI). The tract at residues 23 to 249 (CLGEENLTAL…MSAEVEEPTE (227 aa)) is cytochrome c oxidase subunit II. A helical transmembrane segment spans residues 51–69 (IVMALVSIVVFAIFFIILA). The Cytoplasmic portion of the chain corresponds to 70–89 (KYRRKPGDDEIPKQVHGNTA). The chain crosses the membrane as a helical span at residues 90–108 (LEITWTVIPIILLVILAVP). Over 109-342 (TITGTFMFAD…AYLRSLKVME (234 aa)) the chain is Extracellular. Residues His-175, Cys-210, Cys-214, and His-218 each coordinate Cu cation. A Cytochrome c domain is found at 250–342 (TLANQGRQVF…AYLRSLKVME (93 aa)). Residues Cys-264, Cys-267, His-268, and Met-317 each coordinate heme c.

The protein belongs to the cytochrome c oxidase subunit 2 family. Requires Cu cation as cofactor. Heme c is required as a cofactor.

The protein localises to the cell membrane. The catalysed reaction is 4 Fe(II)-[cytochrome c] + O2 + 8 H(+)(in) = 4 Fe(III)-[cytochrome c] + 2 H2O + 4 H(+)(out). Functionally, subunits I and II form the functional core of the enzyme complex. Electrons originating in cytochrome c are transferred via heme a and Cu(A) to the binuclear center formed by heme a3 and Cu(B). This Alkalihalophilus pseudofirmus (strain ATCC BAA-2126 / JCM 17055 / OF4) (Bacillus pseudofirmus) protein is Cytochrome c oxidase subunit 2 (ctaC).